A 529-amino-acid chain; its full sequence is Acid-sensing ion channel 1C (529 aa).

Residues 1-51 (MTAMKGDSEDSIESMRPSNLQVFANNSTLHGMSHIFAYGHMTFRRFLWTLS) lie on the Cytoplasmic side of the membrane. The helical transmembrane segment at 52 to 68 (FMGSLGLLMYVCMDRVY) threads the bilayer. Topologically, residues 69–427 (YYFEFPHVTK…EKIEQKKAYE (359 aa)) are extracellular. Asn-86, Asn-155, and Asn-161 each carry an N-linked (GlcNAc...) asparagine glycan. Cystine bridges form between Cys-95–Cys-196, Cys-174–Cys-181, Cys-292–Cys-367, Cys-310–Cys-363, Cys-314–Cys-361, Cys-323–Cys-345, and Cys-325–Cys-337. An N-linked (GlcNAc...) asparagine glycan is attached at Asn-185. Residues Asn-368 and Asn-395 are each glycosylated (N-linked (GlcNAc...) asparagine). A discontinuously helical transmembrane segment spans residues 428–458 (VAGLLGDIGGQMGLFIGASVLTILEIFDYLY). The short motif at 444–446 (GAS) is the GAS motif; ion selectivity filter element. Over 459 to 529 (EVLKDKILGS…PFVVGSNSGK (71 aa)) the chain is Cytoplasmic.

The protein belongs to the amiloride-sensitive sodium channel (TC 1.A.6) family. ASIC1 subfamily. Homotrimer. Heterotrimer; with other ASIC proteins producing channel with different properties. Interacts with asic1a. Expressed in central nervous system.

Its subcellular location is the cell membrane. The protein resides in the postsynaptic cell membrane. The protein localises to the cell projection. It localises to the dendrite. It catalyses the reaction Na(+)(in) = Na(+)(out). It carries out the reaction K(+)(in) = K(+)(out). The catalysed reaction is Li(+)(in) = Li(+)(out). The enzyme catalyses Ca(2+)(in) = Ca(2+)(out). Its activity is regulated as follows. Inhibited by the diuretic drug amiloride. Forms voltage-independent, pH-gated trimeric sodium channels that act as postsynaptic excitatory receptors in the nervous system, playing a crucial role in regulating synaptic plasticity, learning, and memory. Upon extracellular pH drop this channel elicits transient, fast activating, and completely desensitizing inward currents. Displays high selectivity for sodium ions but can also permit the permeation of other cations. The sequence is that of Acid-sensing ion channel 1C from Danio rerio (Zebrafish).